Reading from the N-terminus, the 120-residue chain is Chaperonin GroEL (120 aa).

ATP is bound at residue 23–27 (DGTTT).

It belongs to the chaperonin (HSP60) family. In terms of assembly, forms a cylinder of 14 subunits composed of two heptameric rings stacked back-to-back. Interacts with the co-chaperonin GroES.

It localises to the cytoplasm. It catalyses the reaction ATP + H2O + a folded polypeptide = ADP + phosphate + an unfolded polypeptide.. Together with its co-chaperonin GroES, plays an essential role in assisting protein folding. The GroEL-GroES system forms a nano-cage that allows encapsulation of the non-native substrate proteins and provides a physical environment optimized to promote and accelerate protein folding. The sequence is that of Chaperonin GroEL from Mycolicibacterium chitae (Mycobacterium chitae).